The following is a 44-amino-acid chain: U17-ctenitoxin-Co1a (44 aa).

Intrachain disulfides connect C3/C20, C10/C26, C19/C40, and C28/C38.

Expressed by the venom gland.

It is found in the secreted. In terms of biological role, omega-agatoxins are antagonists of voltage-sensitive calcium channels (Cav). Toxic to mice by intracerebroventricular injection. The protein is U17-ctenitoxin-Co1a of Ctenus ornatus (Brazilian spider).